We begin with the raw amino-acid sequence, 115 residues long: UPF0738 protein SSP1780 (115 aa).

It belongs to the UPF0738 family.

The protein is UPF0738 protein SSP1780 of Staphylococcus saprophyticus subsp. saprophyticus (strain ATCC 15305 / DSM 20229 / NCIMB 8711 / NCTC 7292 / S-41).